A 330-amino-acid polypeptide reads, in one-letter code: Homeobox protein Hox-C13 (330 aa).

Residues 30-47 (GGGGGGGGGTGGAGGGCS) are compositionally biased toward gly residues. The disordered stretch occupies residues 30 to 50 (GGGGGGGGGTGGAGGGCSGAS). The homeobox DNA-binding region spans 260–319 (GRKKRVPYTKVQLKELEKEYAASKFITKEKRRRISATTNLSERQVTIWFQNRRVKEKKVV).

The protein belongs to the Abd-B homeobox family.

It localises to the nucleus. Functionally, transcription factor which plays a role in hair follicle differentiation. Regulates FOXQ1 expression and that of other hair-specific genes. The protein is Homeobox protein Hox-C13 (HOXC13) of Homo sapiens (Human).